Here is a 213-residue protein sequence, read N- to C-terminus: Uracil phosphoribosyltransferase (213 aa).

5-phospho-alpha-D-ribose 1-diphosphate contacts are provided by residues Arg78, Arg103, and 130–138 (DPMLATGGS). Uracil-binding positions include Ile197 and 202–204 (GDA). Asp203 is a 5-phospho-alpha-D-ribose 1-diphosphate binding site.

Belongs to the UPRTase family. The cofactor is Mg(2+).

The catalysed reaction is UMP + diphosphate = 5-phospho-alpha-D-ribose 1-diphosphate + uracil. It participates in pyrimidine metabolism; UMP biosynthesis via salvage pathway; UMP from uracil: step 1/1. With respect to regulation, allosterically activated by GTP. Its function is as follows. Catalyzes the conversion of uracil and 5-phospho-alpha-D-ribose 1-diphosphate (PRPP) to UMP and diphosphate. This Cutibacterium acnes (strain DSM 16379 / KPA171202) (Propionibacterium acnes) protein is Uracil phosphoribosyltransferase.